Here is a 297-residue protein sequence, read N- to C-terminus: Homoserine kinase (297 aa).

Residue 82–92 (PVSRGLGSSAA) coordinates ATP.

The protein belongs to the GHMP kinase family. Homoserine kinase subfamily.

The protein localises to the cytoplasm. It carries out the reaction L-homoserine + ATP = O-phospho-L-homoserine + ADP + H(+). The protein operates within amino-acid biosynthesis; L-threonine biosynthesis; L-threonine from L-aspartate: step 4/5. Catalyzes the ATP-dependent phosphorylation of L-homoserine to L-homoserine phosphate. The polypeptide is Homoserine kinase (Clostridium botulinum (strain Langeland / NCTC 10281 / Type F)).